Here is a 360-residue protein sequence, read N- to C-terminus: Heat-inducible transcription repressor HrcA (360 aa).

It belongs to the HrcA family.

Negative regulator of class I heat shock genes (grpE-dnaK-dnaJ and groELS operons). Prevents heat-shock induction of these operons. In Mesorhizobium japonicum (strain LMG 29417 / CECT 9101 / MAFF 303099) (Mesorhizobium loti (strain MAFF 303099)), this protein is Heat-inducible transcription repressor HrcA.